Consider the following 122-residue polypeptide: Large ribosomal subunit protein uL14 (122 aa).

It belongs to the universal ribosomal protein uL14 family. As to quaternary structure, part of the 50S ribosomal subunit. Forms a cluster with proteins L3 and L19. In the 70S ribosome, L14 and L19 interact and together make contacts with the 16S rRNA in bridges B5 and B8.

In terms of biological role, binds to 23S rRNA. Forms part of two intersubunit bridges in the 70S ribosome. The polypeptide is Large ribosomal subunit protein uL14 (Clostridium kluyveri (strain ATCC 8527 / DSM 555 / NBRC 12016 / NCIMB 10680 / K1)).